The sequence spans 432 residues: Adenylosuccinate synthetase (432 aa).

Residues 12–18 and 40–42 contribute to the GTP site; these read GDEGKGK and GHT. The active-site Proton acceptor is the Asp-13. Positions 13 and 40 each coordinate Mg(2+). Residues 13 to 16, 38 to 41, Thr-132, Arg-146, Gln-226, Thr-241, and Arg-305 contribute to the IMP site; these read DEGK and NAGH. The Proton donor role is filled by His-41. Substrate is bound at residue 301–307; that stretch reads TVTGRKR. GTP contacts are provided by residues Arg-307, 333–335, and 415–417; these read KLD and STS.

It belongs to the adenylosuccinate synthetase family. In terms of assembly, homodimer. Mg(2+) is required as a cofactor.

It localises to the cytoplasm. The catalysed reaction is IMP + L-aspartate + GTP = N(6)-(1,2-dicarboxyethyl)-AMP + GDP + phosphate + 2 H(+). It functions in the pathway purine metabolism; AMP biosynthesis via de novo pathway; AMP from IMP: step 1/2. In terms of biological role, plays an important role in the de novo pathway of purine nucleotide biosynthesis. Catalyzes the first committed step in the biosynthesis of AMP from IMP. This Rhizobium etli (strain ATCC 51251 / DSM 11541 / JCM 21823 / NBRC 15573 / CFN 42) protein is Adenylosuccinate synthetase.